We begin with the raw amino-acid sequence, 925 residues long: Neuronal PAS domain-containing protein 3 (925 aa).

In terms of domain architecture, bHLH spans 58–111; sequence LRKEKSRDAARSRRGKENFEFYELAKLLPLPAAITSQLDKASIIRLTISYLKMR. Residues 60-71 form a DNA-binding region; it reads KEKSRDAARSRR. Disordered stretches follow at residues 119–138 and 219–257; these read PPWNLRMEGPPPNTSVKGAQ and LPPGRGLLSQGTTEDAASSASSSSQSETPEPVETTSPSL. Residues 152–222 enclose the PAS 1 domain; that stretch reads EAHLGSHILQ…EQLGMKLPPG (71 aa). Positions 234–256 are enriched in low complexity; sequence AASSASSSSQSETPEPVETTSPS. Positions 324–394 constitute a PAS 2 domain; the sequence is PPPTINEVRI…HSHLDLLNKG (71 aa). The PAC domain maps to 398-441; it reads TKYYRWMQKNGGYIWIQSSATIAINAKNANEKNIIWVNYLLSNP. Disordered stretches follow at residues 457–555, 576–645, and 664–774; these read PEKA…FGAL, PCES…SSPH, and NESS…GASN. 2 stretches are compositionally biased toward basic and acidic residues: residues 484–493 and 529–549; these read ENSKSDEKGN and DSRDSDDSFEHSDFEHPKAAE. A compositionally biased stretch (basic residues) spans 601–622; it reads KHQKRKRRRKRQKGGSASRRRL. Residues 680 to 690 are compositionally biased toward polar residues; sequence NESPYSMTKPP. 2 stretches are compositionally biased toward gly residues: residues 700-710 and 760-771; these read GQGGSIGGGGA and GGGAGSGGGGPG.

In terms of assembly, efficient DNA binding requires dimerization with another bHLH protein. Interacts with ARNT; forms a heterodimer that binds core DNA sequence 5'-[AG]CGTG-3' within the hypoxia response element (HRE) of target gene promoters. Detected exclusively in adult brain in inhibitory interneurons.

The protein resides in the nucleus. Its function is as follows. May play a broad role in neurogenesis. May control regulatory pathways relevant to schizophrenia and to psychotic illness. In Mus musculus (Mouse), this protein is Neuronal PAS domain-containing protein 3 (Npas3).